We begin with the raw amino-acid sequence, 44 residues long: Thymosin beta-4 (44 aa).

The tract at residues 1–44 is disordered; that stretch reads MSDKPDMGEIQKFNKSKLKKTETQEKNPLPSKETIEQEKQAGES. Position 2 is an N-acetylserine (Ser-2). Phosphoserine is present on Ser-2. Lys-4 is modified (N6-acetyllysine). Lys-12 bears the N6-acetyllysine; alternate mark. Lys-12 is covalently cross-linked (Glycyl lysine isopeptide (Lys-Gly) (interchain with G-Cter in SUMO2); alternate). Position 23 is a phosphothreonine (Thr-23). Residue Lys-26 is modified to N6-acetyllysine. Ser-31 is subject to Phosphoserine. Position 32 is an N6-acetyllysine (Lys-32). Basic and acidic residues predominate over residues 33 to 44; it reads ETIEQEKQAGES. At Thr-34 the chain carries Phosphothreonine. The residue at position 39 (Lys-39) is an N6-acetyllysine.

Belongs to the thymosin beta family. Identified in a complex composed of ACTA1, COBL, GSN AND TMSB4X. Interacts with SERPINB1. AcSDKP is inactivated by ACE, which removes the dipeptide Lys-Pro from its C-terminus.

It localises to the cytoplasm. Its subcellular location is the cytoskeleton. Its function is as follows. Plays an important role in the organization of the cytoskeleton. Binds to and sequesters actin monomers (G actin) and therefore inhibits actin polymerization. Functionally, potent inhibitor of bone marrow derived stem cell differentiation. Acts by inhibits the entry of hematopoietic pluripotent stem cells into the S-phase. This Notamacropus eugenii (Tammar wallaby) protein is Thymosin beta-4 (TMSB4).